Reading from the N-terminus, the 128-residue chain is Flagellar assembly factor FliW 1 (128 aa).

The protein belongs to the FliW family. As to quaternary structure, interacts with translational regulator CsrA and flagellin(s).

The protein localises to the cytoplasm. Its function is as follows. Acts as an anti-CsrA protein, binds CsrA and prevents it from repressing translation of its target genes, one of which is flagellin. Binds to flagellin and participates in the assembly of the flagellum. This is Flagellar assembly factor FliW 1 from Wolinella succinogenes (strain ATCC 29543 / DSM 1740 / CCUG 13145 / JCM 31913 / LMG 7466 / NCTC 11488 / FDC 602W) (Vibrio succinogenes).